The sequence spans 275 residues: tRNA pseudouridine synthase A (275 aa).

The active-site Nucleophile is Asp62. Tyr124 is a binding site for substrate.

Belongs to the tRNA pseudouridine synthase TruA family. As to quaternary structure, homodimer.

It carries out the reaction uridine(38/39/40) in tRNA = pseudouridine(38/39/40) in tRNA. Formation of pseudouridine at positions 38, 39 and 40 in the anticodon stem and loop of transfer RNAs. In Herminiimonas arsenicoxydans, this protein is tRNA pseudouridine synthase A.